The following is a 709-amino-acid chain: Polyribonucleotide nucleotidyltransferase (709 aa).

Aspartate 489 and aspartate 495 together coordinate Mg(2+). The region spanning 556-615 (PKIDMIKIDVDKIKVVIGKGGETIDKIIAETGVKIDIDEEGNVSIFSSDQAAIDRTKDII) is the KH domain. Positions 625–693 (GEVYHAKVVR…DKGRVDASMK (69 aa)) constitute an S1 motif domain.

This sequence belongs to the polyribonucleotide nucleotidyltransferase family. Requires Mg(2+) as cofactor.

It localises to the cytoplasm. It catalyses the reaction RNA(n+1) + phosphate = RNA(n) + a ribonucleoside 5'-diphosphate. Involved in mRNA degradation. Catalyzes the phosphorolysis of single-stranded polyribonucleotides processively in the 3'- to 5'-direction. This Streptococcus agalactiae serotype III (strain NEM316) protein is Polyribonucleotide nucleotidyltransferase.